A 485-amino-acid polypeptide reads, in one-letter code: MGQYSVESHENGEKVYDLICVGFGPASLAIAIAIQEMLPEARPNVLFLERQQQFVWHSGMLLPGSKMQISFIKDLATLRNPQSSFTFLNYLKENGRLLDFINLGTFLPLREEFNDYLQWCASKFANLVSYGETVTLVEPVKNNNTGKVDNFVVHSKVGGIEETRRAKHVVVAVGGRPLLPKPLPEYHPRIVHSSQYSSRVPQNLTDRNAAYRIAVIGAGQSAAETFSDVASRYPNAQTTMFLRGDSLKPSDDSPFVNEIFNPSATDKFFQTPAAERHQQLVENRATNYSVVRLELIEKIYNDLYVQRLRDPSGASWKMNIKNHTEVTGFKNLSEKTVGLQMTHRENGLETVENHEFDLVIVATGYARDMHQQILDPTRELLEDATVARFPINRDYRVQFSGEKVSSDAGIYLQGCNETTHGLSDTLLSVLAVRAGEVVESIFMKSASNGHSNGHSNGHASKVSAKKAEVYTNGNGHNGVTSNGYH.

FAD-binding positions include 49-57 (ERQQQFVWH) and glutamine 68. Lysine 73 is an L-ornithine binding site. Valine 134 serves as a coordination point for FAD. Arginine 243 provides a ligand contact to NADP(+). L-ornithine-binding positions include 257 to 260 (NEIF) and asparagine 287. 287–289 (NYS) contacts NADP(+). 425–427 (TLL) is an FAD binding site. Serine 428 is an L-ornithine binding site.

The protein belongs to the lysine N(6)-hydroxylase/L-ornithine N(5)-oxygenase family. As to quaternary structure, homotetramer. The cofactor is FAD.

It catalyses the reaction L-ornithine + NADH + O2 = N(5)-hydroxy-L-ornithine + NAD(+) + H2O. The catalysed reaction is L-ornithine + NADPH + O2 = N(5)-hydroxy-L-ornithine + NADP(+) + H2O. It functions in the pathway siderophore biosynthesis. L-ornithine N(5)-oxygenase; part of the gene cluster that mediates the biosynthesis of desferriferrichrome that chelates Fe(3+) to form ferrichrome. Fe(3+) is a key factor for induction of trap formation and the fungus uses the iron chelating desferriferrichrome to sequester Fe(3+) to inhibit trap formation and increase nematicidal activity. The biosynthesis of desferriferrichrome requires the action of the L-ornithine N(5)-oxygenase (LOO) Ao414 that hydroxylates L-ornithine at N(5), resulting in the formation of N(5)-hydroxyl-L-ornithine, which is subsequently N-acetylated to yield N(5)-acetyl-N(5)-hydroxy-L-ornithine (L-AHO). L-AHO harbors one hydroxamate moiety, which is the key core responsible for chelating iron. Then, L-AHO is further condensated with glycines to form desferriferrichrome through the NRPS protein Ao415. The polypeptide is L-ornithine N(5)-oxygenase (Arthrobotrys oligospora (strain ATCC 24927 / CBS 115.81 / DSM 1491) (Nematode-trapping fungus)).